The following is a 96-amino-acid chain: Acylphosphatase (96 aa).

Residues 11-96 (ARRWYVRGRV…ITSYDSFRIR (86 aa)) form the Acylphosphatase-like domain. Residues R26 and N44 contribute to the active site.

It belongs to the acylphosphatase family.

It carries out the reaction an acyl phosphate + H2O = a carboxylate + phosphate + H(+). This Solibacter usitatus (strain Ellin6076) protein is Acylphosphatase (acyP).